Here is a 247-residue protein sequence, read N- to C-terminus: Sec-independent protein translocase protein TatC (247 aa).

5 consecutive transmembrane segments (helical) span residues 21–41, 71–91, 109–129, 154–174, and 195–215; these read IILL…KPLI, AFII…WAFV, ITFL…FPFI, FLLQ…VIML, and FCLL…HLMI.

The protein belongs to the TatC family. As to quaternary structure, forms a complex with TatA.

The protein resides in the cell membrane. Functionally, part of the twin-arginine translocation (Tat) system that transports large folded proteins containing a characteristic twin-arginine motif in their signal peptide across membranes. This Listeria innocua serovar 6a (strain ATCC BAA-680 / CLIP 11262) protein is Sec-independent protein translocase protein TatC.